A 459-amino-acid chain; its full sequence is tRNA modification GTPase MnmE (459 aa).

The (6S)-5-formyl-5,6,7,8-tetrahydrofolate site is built by R23, E88, and R127. The region spanning 223 to 381 (GLDVVIVGKP…LKEYIKDLFF (159 aa)) is the TrmE-type G domain. Position 233 (N233) interacts with K(+). GTP is bound by residues 233 to 238 (NVGKSS), 252 to 258 (TEIPGTT), and 277 to 280 (DTAG). Residue S237 participates in Mg(2+) binding. Positions 252, 254, and 257 each coordinate K(+). T258 is a binding site for Mg(2+). (6S)-5-formyl-5,6,7,8-tetrahydrofolate is bound at residue K459.

It belongs to the TRAFAC class TrmE-Era-EngA-EngB-Septin-like GTPase superfamily. TrmE GTPase family. In terms of assembly, homodimer. Heterotetramer of two MnmE and two MnmG subunits. Requires K(+) as cofactor.

The protein localises to the cytoplasm. Functionally, exhibits a very high intrinsic GTPase hydrolysis rate. Involved in the addition of a carboxymethylaminomethyl (cmnm) group at the wobble position (U34) of certain tRNAs, forming tRNA-cmnm(5)s(2)U34. This chain is tRNA modification GTPase MnmE, found in Clostridium tetani (strain Massachusetts / E88).